The following is a 325-amino-acid chain: DNA-directed RNA polymerase subunit alpha (325 aa).

Residues 1 to 231 are alpha N-terminal domain (alpha-NTD); sequence MQNSLLKPRI…DQLNVFAALE (231 aa). The interval 246-325 is alpha C-terminal domain (alpha-CTD); the sequence is VDPILLRPVD…ENWPPAGLEK (80 aa).

This sequence belongs to the RNA polymerase alpha chain family. In terms of assembly, homodimer. The RNAP catalytic core consists of 2 alpha, 1 beta, 1 beta' and 1 omega subunit. When a sigma factor is associated with the core the holoenzyme is formed, which can initiate transcription.

It catalyses the reaction RNA(n) + a ribonucleoside 5'-triphosphate = RNA(n+1) + diphosphate. DNA-dependent RNA polymerase catalyzes the transcription of DNA into RNA using the four ribonucleoside triphosphates as substrates. The protein is DNA-directed RNA polymerase subunit alpha of Herminiimonas arsenicoxydans.